The sequence spans 289 residues: Iodotyrosine deiodinase 1 (289 aa).

The chain crosses the membrane as a helical span at residues 1–21 (MFLLTPVLVAVVCILMVWIFK). FMN-binding positions include 100–104 (RRSVR) and 128–129 (SG). 3,5-diiodo-L-tyrosine-binding residues include Ala130, Glu157, Tyr161, and Lys182. 3-iodo-L-tyrosine is bound by residues Ala130, Glu157, Tyr161, and Lys182. Residues 237–239 (TTT) and Arg279 each bind FMN.

This sequence belongs to the nitroreductase family. Homodimer. It depends on FMN as a cofactor. As to expression, detected in thyroid (at protein level).

The protein localises to the cell membrane. The protein resides in the cytoplasmic vesicle membrane. The catalysed reaction is 2 iodide + L-tyrosine + 2 NADP(+) = 3,5-diiodo-L-tyrosine + 2 NADPH + H(+). It catalyses the reaction iodide + L-tyrosine + NADP(+) = 3-iodo-L-tyrosine + NADPH. The enzyme catalyses 3-iodo-L-tyrosine + iodide + NADP(+) = 3,5-diiodo-L-tyrosine + NADPH + H(+). It carries out the reaction L-tyrosine + chloride + NADP(+) = 3-chloro-L-tyrosine + NADPH. The catalysed reaction is bromide + L-tyrosine + NADP(+) = 3-bromo-L-tyrosine + NADPH. Catalyzes the dehalogenation of halotyrosines such as 3-bromo-L-tyrosine, 3-chloro-L-tyrosine, 3-iodo-L-tyrosine and 3,5-diiodo-L-tyrosine. During thyroid hormone biosynthesis, facilitates iodide salvage by catalysing the oxidative NADPH-dependent deiodination of the halogenated by-products of thyroid hormone production, monoiodotyrosine (L-MIT) and diiodotyrosine (L-DIT). The scavanged iodide can then reenter the hormone-producing pathways. Acts more efficiently on 3-iodo-L-tyrosine than 3,5-diiodo-L-tyrosine. In Sus scrofa (Pig), this protein is Iodotyrosine deiodinase 1 (IYD).